A 161-amino-acid chain; its full sequence is Large ribosomal subunit protein uL15 (161 aa).

Residues 1-43 (MKLSEISDNPGARKKRMRIGRGIGSGKGKTGGRGGKGQTARSG) form a disordered region. A compositionally biased stretch (gly residues) spans 21-37 (RGIGSGKGKTGGRGGKG).

Belongs to the universal ribosomal protein uL15 family. Part of the 50S ribosomal subunit.

Functionally, binds to the 23S rRNA. In Rhodopseudomonas palustris (strain HaA2), this protein is Large ribosomal subunit protein uL15.